A 143-amino-acid polypeptide reads, in one-letter code: Hemoglobin subunit alpha (143 aa).

The Globin domain maps to 2–143 (VLSPADKTNV…VSTVLVSKYR (142 aa)). Ser4 carries the phosphoserine modification. Position 8 is an N6-succinyllysine (Lys8). Phosphothreonine is present on Thr9. Lys12 bears the N6-succinyllysine mark. N6-acetyllysine; alternate is present on Lys17. An N6-succinyllysine; alternate modification is found at Lys17. At Tyr25 the chain carries Phosphotyrosine. Ser36 carries the phosphoserine modification. At Lys41 the chain carries N6-succinyllysine. Ser51 is modified (phosphoserine). Position 60 (His60) interacts with O2. His89 lines the heme b pocket. Ser104 is subject to Phosphoserine. Position 110 is a phosphothreonine (Thr110). Ser126 is modified (phosphoserine). Thr136 carries the phosphothreonine modification. Ser140 is subject to Phosphoserine.

The protein belongs to the globin family. Heterotetramer of two alpha chains and two beta chains. Red blood cells.

Involved in oxygen transport from the lung to the various peripheral tissues. Functionally, hemopressin acts as an antagonist peptide of the cannabinoid receptor CNR1. Hemopressin-binding efficiently blocks cannabinoid receptor CNR1 and subsequent signaling. In Pipistrellus abramus (Japanese pipistrelle), this protein is Hemoglobin subunit alpha (HBA).